We begin with the raw amino-acid sequence, 87 residues long: Small ribosomal subunit protein bS16 (87 aa).

Belongs to the bacterial ribosomal protein bS16 family.

In Psychrobacter sp. (strain PRwf-1), this protein is Small ribosomal subunit protein bS16.